A 147-amino-acid polypeptide reads, in one-letter code: Hemoglobin subunit beta (147 aa).

At Val2 the chain carries N-acetylvaline. In terms of domain architecture, Globin spans 3–147; the sequence is NLTSDEKTAV…VANALAHKYH (145 aa). Ser45 is subject to Phosphoserine. The residue at position 60 (Lys60) is an N6-acetyllysine. Residue His64 coordinates heme b. Position 83 is an N6-acetyllysine (Lys83). His93 serves as a coordination point for heme b. Residue Cys94 is modified to S-nitrosocysteine. Lys145 bears the N6-acetyllysine mark.

Belongs to the globin family. In terms of assembly, heterotetramer of two alpha chains and two beta chains. Red blood cells.

In terms of biological role, involved in oxygen transport from the lung to the various peripheral tissues. The chain is Hemoglobin subunit beta (HBB) from Dasypus novemcinctus (Nine-banded armadillo).